The chain runs to 138 residues: Superoxide dismutase [Mn] (138 aa).

The Mn(2+) site is built by Ser-1, His-49, Asp-133, and His-137.

Belongs to the iron/manganese superoxide dismutase family. The cofactor is Mn(2+).

The enzyme catalyses 2 superoxide + 2 H(+) = H2O2 + O2. In terms of biological role, destroys superoxide anion radicals which are normally produced within the cells and which are toxic to biological systems. The polypeptide is Superoxide dismutase [Mn] (sodA) (Mycobacterium marinum).